An 87-amino-acid chain; its full sequence is MARVTVEDCLDNVDNRFELVMLATKRSRQLATGGKEPKVAWENDKPTVVALREIAAGLVDYEVVAQEDIVEEEPLFAAFEEEANEPL.

Belongs to the RNA polymerase subunit omega family. As to quaternary structure, the RNAP catalytic core consists of 2 alpha, 1 beta, 1 beta' and 1 omega subunit. When a sigma factor is associated with the core the holoenzyme is formed, which can initiate transcription.

It catalyses the reaction RNA(n) + a ribonucleoside 5'-triphosphate = RNA(n+1) + diphosphate. Promotes RNA polymerase assembly. Latches the N- and C-terminal regions of the beta' subunit thereby facilitating its interaction with the beta and alpha subunits. This chain is DNA-directed RNA polymerase subunit omega, found in Ectopseudomonas mendocina (strain ymp) (Pseudomonas mendocina).